A 909-amino-acid chain; its full sequence is DNA mismatch repair protein MutS (909 aa).

614 to 621 (GPNMAGKS) lines the ATP pocket. The disordered stretch occupies residues 798–827 (LEENSPQNNDISKESSSSSNSHDKLESSVI). Residues 818 to 827 (SHDKLESSVI) show a composition bias toward basic and acidic residues.

This sequence belongs to the DNA mismatch repair MutS family.

In terms of biological role, this protein is involved in the repair of mismatches in DNA. It is possible that it carries out the mismatch recognition step. This protein has a weak ATPase activity. This Clostridium novyi (strain NT) protein is DNA mismatch repair protein MutS.